A 221-amino-acid polypeptide reads, in one-letter code: Histone H1.3 (221 aa).

Positions 1–17 (MSETAPVAPAAPAPAEK) are enriched in low complexity. The disordered stretch occupies residues 1-42 (MSETAPVAPAAPAPAEKTPVKKKAKKSGVAAGKRKASGPPVS). Ser-2 carries the post-translational modification N-acetylserine. Ser-2 bears the Phosphoserine mark. Lys-17 carries the post-translational modification N6-acetyllysine. Thr-18 bears the Phosphothreonine mark. A compositionally biased stretch (basic residues) spans 20-36 (VKKKAKKSGVAAGKRKA). N6-(beta-hydroxybutyryl)lysine is present on residues Lys-35 and Lys-53. An H15 domain is found at 37–110 (SGPPVSELIT…GASGSFKLNK (74 aa)). A Citrulline modification is found at Arg-55. Residues Lys-65, Lys-86, and Lys-91 each carry the N6-(beta-hydroxybutyryl)lysine modification. The tract at residues 87–221 (SLVSKGTLVQ…KAKKAVSKKK (135 aa)) is disordered. Ser-105 carries the phosphoserine; by PKC modification. Residue Lys-107 is modified to N6-(beta-hydroxybutyryl)lysine. Composition is skewed to basic residues over residues 120–141 (KGKKAGAAKPKKAAGAAKKPKK), 150–161 (KAAKKTPKKVKK), 170–187 (KVAKSPKKAKAAKPKKPT), and 194–221 (KAPKPKAAKPKAAKPKATKAKKAVSKKK).

Belongs to the histone H1/H5 family. In terms of processing, H1 histones are progressively phosphorylated during the cell cycle, becoming maximally phosphorylated during late G2 phase and M phase, and being dephosphorylated sharply thereafter. Citrullination at Arg-55 (H1R54ci) by PADI4 takes place within the DNA-binding site of H1 and results in its displacement from chromatin and global chromatin decondensation, thereby promoting pluripotency and stem cell maintenance.

Its subcellular location is the nucleus. It is found in the chromosome. Its function is as follows. H1 histones bind to linker DNA between nucleosomes forming the macromolecular structure known as the chromatin fiber. H1 histones are necessary for the condensation of nucleosome chains into higher-order structured fibers. Also acts as a regulator of individual gene transcription through chromatin remodeling, nucleosome spacing and DNA methylation. This chain is Histone H1.3, found in Bos taurus (Bovine).